A 143-amino-acid chain; its full sequence is 3-hydroxyacyl-[acyl-carrier-protein] dehydratase FabZ (143 aa).

Residue H49 is part of the active site.

It belongs to the thioester dehydratase family. FabZ subfamily.

It localises to the cytoplasm. The enzyme catalyses a (3R)-hydroxyacyl-[ACP] = a (2E)-enoyl-[ACP] + H2O. In terms of biological role, involved in unsaturated fatty acids biosynthesis. Catalyzes the dehydration of short chain beta-hydroxyacyl-ACPs and long chain saturated and unsaturated beta-hydroxyacyl-ACPs. The polypeptide is 3-hydroxyacyl-[acyl-carrier-protein] dehydratase FabZ (Wolbachia pipientis wMel).